The primary structure comprises 259 residues: Phosphoribosylaminoimidazole-succinocarboxamide synthase (259 aa).

This sequence belongs to the SAICAR synthetase family.

It catalyses the reaction 5-amino-1-(5-phospho-D-ribosyl)imidazole-4-carboxylate + L-aspartate + ATP = (2S)-2-[5-amino-1-(5-phospho-beta-D-ribosyl)imidazole-4-carboxamido]succinate + ADP + phosphate + 2 H(+). Its pathway is purine metabolism; IMP biosynthesis via de novo pathway; 5-amino-1-(5-phospho-D-ribosyl)imidazole-4-carboxamide from 5-amino-1-(5-phospho-D-ribosyl)imidazole-4-carboxylate: step 1/2. The sequence is that of Phosphoribosylaminoimidazole-succinocarboxamide synthase from Hyphomonas neptunium (strain ATCC 15444).